A 500-amino-acid chain; its full sequence is Oryzalexin D synthase (500 aa).

The helical transmembrane segment at 4-24 (SQMWLLWGALSVALFFYFSTL) threads the bilayer. Cys-442 contributes to the heme binding site.

Belongs to the cytochrome P450 family. Heme serves as cofactor.

The protein resides in the membrane. The catalysed reaction is ent-cassa-12,15-diene + reduced [NADPH--hemoprotein reductase] + O2 = ent-11beta-hydroxycassa-12,15-diene + oxidized [NADPH--hemoprotein reductase] + H2O + H(+). It carries out the reaction ent-sandaracopimaradien-3beta-ol + reduced [NADPH--hemoprotein reductase] + O2 = oryzalexin D + oxidized [NADPH--hemoprotein reductase] + H2O + H(+). Its function is as follows. Enzyme of the diterpenoid metabolism involved in the biosynthesis of both phytocassane and the oryzalexin class of phytoalexins. Can hydroxylate syn-pimaradiene, ent-pimaradiene, ent-sandaracopimaradiene, ent-isokaurene, ent-kaurene, and ent-cassadiene, but no activity with syn-stemodene, syn-stemarene, syn-labdatriene, C11-alpha-hydroxy-ent-cassadiene or syn-pimadien-19-oic acid as substrates. Hydroxylates 3-alpha-hydroxy-ent-sandaracopimaradiene at C-7-beta, resulting in a 3-alpha,7-beta-diol corresponding to oryzalexins D. This is Oryzalexin D synthase from Oryza sativa subsp. japonica (Rice).